A 336-amino-acid polypeptide reads, in one-letter code: DNA-directed RNA polymerase subunit alpha (336 aa).

The tract at residues 1 to 232 is alpha N-terminal domain (alpha-NTD); sequence MIQKNWQELI…DQLGVFVNFD (232 aa). The tract at residues 248-336 is alpha C-terminal domain (alpha-CTD); it reads FNPALLKKVD…DLAKRYEDQY (89 aa).

Belongs to the RNA polymerase alpha chain family. As to quaternary structure, homodimer. The RNAP catalytic core consists of 2 alpha, 1 beta, 1 beta' and 1 omega subunit. When a sigma factor is associated with the core the holoenzyme is formed, which can initiate transcription.

It catalyses the reaction RNA(n) + a ribonucleoside 5'-triphosphate = RNA(n+1) + diphosphate. Functionally, DNA-dependent RNA polymerase catalyzes the transcription of DNA into RNA using the four ribonucleoside triphosphates as substrates. This Rhizobium radiobacter (Agrobacterium tumefaciens) protein is DNA-directed RNA polymerase subunit alpha.